The sequence spans 256 residues: Homeobox-leucine zipper protein HOX18 (256 aa).

Residues 52 to 117 (YDHGRDEEQA…GGGGGTRKKL (66 aa)) form a disordered region. Over residues 102–112 (DGGSGSGGGGG) the composition is skewed to gly residues. Positions 112-171 (GTRKKLQLTKEQSTLLEDSFRVHNILSHAQKHELARQLKLKPRQVEVWFQNRRARTKLKQ) form a DNA-binding region, homeobox. The interval 170 to 214 (KQTEVDCEFLKRCCESLTEENKQLKHELMELRRLASAAAAAAGSQ) is leucine-zipper.

This sequence belongs to the HD-ZIP homeobox family. Class II subfamily. As to expression, expressed in roots, leaf sheaths and blades and panicles.

The protein resides in the nucleus. Functionally, probable transcription factor. The sequence is that of Homeobox-leucine zipper protein HOX18 (HOX18) from Oryza sativa subsp. indica (Rice).